An 846-amino-acid polypeptide reads, in one-letter code: Leucine--tRNA ligase (846 aa).

Residues 47 to 57 (PYPSGRIHMGH) carry the 'HIGH' region motif. Positions 621 to 625 (KMSKS) match the 'KMSKS' region motif. Lys624 lines the ATP pocket.

The protein belongs to the class-I aminoacyl-tRNA synthetase family.

The protein localises to the cytoplasm. The enzyme catalyses tRNA(Leu) + L-leucine + ATP = L-leucyl-tRNA(Leu) + AMP + diphosphate. This chain is Leucine--tRNA ligase, found in Zymomonas mobilis subsp. mobilis (strain ATCC 31821 / ZM4 / CP4).